Here is a 967-residue protein sequence, read N- to C-terminus: MQNAPKCYLPNSRKGRDVNFHDRGPETLKCLYDESEDNNNFTMHSESIGPKSLDSLSPRRLSNYSSAVDPRTTSLEDVPRLILTRSNSQEQTPLRTHTPVEYMSDSIHKSLADLQLGGSSYSVAESPVPVLQSSAVSEADDMASAHSAHPSRKASRSLRLFESSTSNNLETGNSTNTALHNVSSPLESVSERLSKSGSPSVGAQHDLDEVISEKDTSLSRRSSRGRSSAPKRRKDSGSSKTTATYIPHNPSKKSSQHLPLLPDASFELERSVSRSYQSPASTPRSSVSSVSSSPPEDHPFFHWNVDYPVTVRLEPFKHQVGGHTAFFRFSKRAVCKPLTRNENTFYETIEACHPELLPFIPKYIGVLNVTHTITKTEENDSTTEYVNTESSSKTPAPHKHTFNSCYQKKDYGYIPEVSVEQNRHIFPEWMLPDKRSHSYGSPKSLHHKSSSAGERPVSPTFVADIPPKTPWGTTLINRKLREEVLREVFAPKHARRRLGTRFHSRSSHRPSVFRDNSVAFGQLDNGNTSSRARDKDADPNKSLSCSVEDKHYDLHSAVAEENEEVDEELLNVPSNNQGKSYRRFSSDAVWEEPESNEFPRVSGTMEDYDSRESTGHTIKELRSTPNSHGTVPDDSIFAMDNEENSELPPPLEPAEIGDPFRSVNDPRRVLSLPHMASADEDHRIPASDNQNNNNNDANALAENSESQHSTQIERYIVIEDLTSGMKRPCVLDVKMGTRQYGIMATEKKKASQTKKCAMTTSRVLGVRICGMQVWHPWLQSYTFEDKYVGRDIKAGEEFQHALMRYLGKTDDDEDNSHLLVHHIPTIIRKLEQLEQIVRFLKGSRLYASSLLFLYDGEPPPSDKSSKEKVKPREIDIRIVDFANCVFAEDKELLAKATCPPQHKDTYDRGYVRGLRTLRLYFLKIWKEAKGMQIAERGYEDSLSNAYDELGGLMSYSNDDDSCGETST.

2 disordered regions span residues 1–23 and 41–72; these read MQNA…FHDR and FTMH…DPRT. Residues 14-23 show a composition bias toward basic and acidic residues; sequence KGRDVNFHDR. The segment covering 60–72 has biased composition (polar residues); sequence RLSNYSSAVDPRT. Serine 86 is subject to Phosphoserine. Disordered regions lie at residues 135-259, 271-296, 380-399, 437-464, and 499-544; these read AVSE…QHLP, SVSR…SPPE, DSTT…APHK, HSYG…FVAD, and GTRF…KSLS. A compositionally biased stretch (polar residues) spans 162 to 187; the sequence is ESSTSNNLETGNSTNTALHNVSSPLE. Positions 205-218 are enriched in basic and acidic residues; that stretch reads HDLDEVISEKDTSL. The span at 221 to 234 shows a compositional bias: basic residues; the sequence is RSSRGRSSAPKRRK. Positions 278 to 294 are enriched in low complexity; it reads SPASTPRSSVSSVSSSP. Residues 382–394 show a composition bias toward polar residues; the sequence is TTEYVNTESSSKT. Residues 499–508 are compositionally biased toward basic residues; sequence GTRFHSRSSH. Serine 585 is modified (phosphoserine). 2 disordered regions span residues 594-665 and 681-708; these read ESNE…SVND and DHRI…ESQH. Positions 608–622 are enriched in basic and acidic residues; sequence YDSRESTGHTIKELR. The segment covering 686 to 704 has biased composition (low complexity); sequence ASDNQNNNNNDANALAENS. 728–736 serves as a coordination point for substrate; that stretch reads PCVLDVKMG.

Belongs to the inositol phosphokinase (IPK) family.

It is found in the cytoplasm. This is an uncharacterized protein from Schizosaccharomyces pombe (strain 972 / ATCC 24843) (Fission yeast).